The primary structure comprises 553 residues: Transcriptional regulator HilA (553 aa).

A DNA-binding region (ompR/PhoB-type) is located at residues Asn11 to Arg107. At Asp62 the chain carries 4-aspartylphosphate. The stretch at Ala372–Arg405 is one TPR repeat.

In terms of biological role, the main transcriptional regulator of the Salmonella pathogenicity island 1 (SPI1) gene expression. Activates the expression of invasion genes by a direct action at their promoters and also indirectly by increasing the level of invF. Also binds upstream of prgH and directly activates the expression of prgHIJK operon. This is Transcriptional regulator HilA (hilA) from Salmonella typhi.